A 342-amino-acid chain; its full sequence is uncharacterized protein (342 aa).

Belongs to the proline racemase family.

This is an uncharacterized protein from Brucella canis (strain ATCC 23365 / NCTC 10854 / RM-666).